The following is a 457-amino-acid chain: tRNA modification GTPase MnmE (457 aa).

Residues arginine 25, glutamate 87, and arginine 126 each contribute to the (6S)-5-formyl-5,6,7,8-tetrahydrofolate site. Residues 223-377 (GISTAIIGRP…IEERINQLFF (155 aa)) enclose the TrmE-type G domain. Asparagine 233 contributes to the K(+) binding site. GTP is bound by residues 233–238 (NVGKSS), 252–258 (TDIEGTT), and 277–280 (DTAG). Serine 237 contributes to the Mg(2+) binding site. K(+) is bound by residues threonine 252, isoleucine 254, and threonine 257. Residue threonine 258 participates in Mg(2+) binding. Residue lysine 457 participates in (6S)-5-formyl-5,6,7,8-tetrahydrofolate binding.

The protein belongs to the TRAFAC class TrmE-Era-EngA-EngB-Septin-like GTPase superfamily. TrmE GTPase family. In terms of assembly, homodimer. Heterotetramer of two MnmE and two MnmG subunits. K(+) is required as a cofactor.

The protein localises to the cytoplasm. Exhibits a very high intrinsic GTPase hydrolysis rate. Involved in the addition of a carboxymethylaminomethyl (cmnm) group at the wobble position (U34) of certain tRNAs, forming tRNA-cmnm(5)s(2)U34. This Streptococcus sanguinis (strain SK36) protein is tRNA modification GTPase MnmE.